The chain runs to 337 residues: S-adenosylmethionine:tRNA ribosyltransferase-isomerase (337 aa).

This sequence belongs to the QueA family. In terms of assembly, monomer.

The protein resides in the cytoplasm. It carries out the reaction 7-aminomethyl-7-carbaguanosine(34) in tRNA + S-adenosyl-L-methionine = epoxyqueuosine(34) in tRNA + adenine + L-methionine + 2 H(+). Its pathway is tRNA modification; tRNA-queuosine biosynthesis. Its function is as follows. Transfers and isomerizes the ribose moiety from AdoMet to the 7-aminomethyl group of 7-deazaguanine (preQ1-tRNA) to give epoxyqueuosine (oQ-tRNA). In Legionella pneumophila (strain Lens), this protein is S-adenosylmethionine:tRNA ribosyltransferase-isomerase.